A 384-amino-acid chain; its full sequence is 2-deoxy-scyllo-inosose synthase (384 aa).

NAD(+) is bound by residues Asp-42, 73-76, 105-109, 129-130, 140-142, and 151-152; these read EVHK, GITGN, TT, SLK, and KN. Residue Lys-142 is part of the active site. A Co(2+)-binding site is contributed by Glu-184. Glu-244 is an active-site residue. The Co(2+) site is built by His-247 and His-263.

It belongs to the sugar phosphate cyclases superfamily. DOI synthase family. The cofactor is NAD(+). Requires Co(2+) as cofactor.

The enzyme catalyses D-glucose 6-phosphate = 2-deoxy-L-scyllo-inosose + phosphate. It functions in the pathway metabolic intermediate biosynthesis; 2-deoxystreptamine biosynthesis; 2-deoxystreptamine from D-glucose 6-phosphate: step 1/4. Its pathway is antibiotic biosynthesis; lividomycin biosynthesis. Catalyzes the intramolecular carbocycle formation from D-glucose-6-phosphate to 2-deoxy-scyllo-inosose (DOI). The polypeptide is 2-deoxy-scyllo-inosose synthase (livC) (Streptomyces lividus).